We begin with the raw amino-acid sequence, 649 residues long: Protein PSK SIMULATOR 3 (649 aa).

Gly-2 is lipidated: N-myristoyl glycine. Residues 18–43 (SGSSVADDGREPDFGHSQPNGQTSLI) form a disordered region.

Its subcellular location is the nucleus. Functionally, promotes plant growth, especially at the vegetative stage, probably via the regulation of phytosulfokine (PSK) signaling; PSK are peptide phytohormones acting as growth factors. Together with PSI2 and PSI3, required during vegetative growth and reproduction. May also have a function in carbohydrate metabolism. In Arabidopsis thaliana (Mouse-ear cress), this protein is Protein PSK SIMULATOR 3.